We begin with the raw amino-acid sequence, 692 residues long: Methionine--tRNA ligase (692 aa).

Residues 12 to 22 carry the 'HIGH' region motif; it reads PYANGSFHIGH. The Zn(2+) site is built by Cys-143, Cys-146, Cys-156, and Cys-159. The short motif at 341-345 is the 'KMSKS' region element; that stretch reads KMSKS. Lys-344 contacts ATP. The region spanning 586–692 is the tRNA-binding domain; the sequence is DFAKIDLRIA…PGAQPGMRVR (107 aa).

Belongs to the class-I aminoacyl-tRNA synthetase family. MetG type 1 subfamily. Homodimer. Zn(2+) serves as cofactor.

Its subcellular location is the cytoplasm. It catalyses the reaction tRNA(Met) + L-methionine + ATP = L-methionyl-tRNA(Met) + AMP + diphosphate. Is required not only for elongation of protein synthesis but also for the initiation of all mRNA translation through initiator tRNA(fMet) aminoacylation. The sequence is that of Methionine--tRNA ligase from Bordetella parapertussis (strain 12822 / ATCC BAA-587 / NCTC 13253).